A 346-amino-acid chain; its full sequence is MLIQDGDKLINTRNWAELVKPEQLVRDPKSNELYGKFICEPLERGFGTTIGNSLRRVLLSSMQGAAAVAVKIEGVQHEFTTIEGVMEDVTEIVLNIKQIRFAMTTDEPQFLTLRVNKQGVVTAADIQENQNVKVLNPEQIIATLSEKMDMEMTFEIRMGKGYVPADMHEGLVNEIGHIILDSSFSPIRKVAYSVEQARVGQMTNYDKLIIEVFTDGSVTPEDAIAYSAKILKDQLSVFINFDEMGSEQEESKESDLDLNPNLFKSIDELELSVRATNCLKAANIRIVGELVQRTEQTMLKTKNFGRKSLDEIRRVLDSMELKFGMVLEDFDKKHQEWLKRKEKNEA.

The segment at M1 to D242 is alpha N-terminal domain (alpha-NTD). The segment at L258 to A346 is alpha C-terminal domain (alpha-CTD).

It belongs to the RNA polymerase alpha chain family. In terms of assembly, homodimer. The RNAP catalytic core consists of 2 alpha, 1 beta, 1 beta' and 1 omega subunit. When a sigma factor is associated with the core the holoenzyme is formed, which can initiate transcription.

It catalyses the reaction RNA(n) + a ribonucleoside 5'-triphosphate = RNA(n+1) + diphosphate. Functionally, DNA-dependent RNA polymerase catalyzes the transcription of DNA into RNA using the four ribonucleoside triphosphates as substrates. This Maridesulfovibrio salexigens (strain ATCC 14822 / DSM 2638 / NCIMB 8403 / VKM B-1763) (Desulfovibrio salexigens) protein is DNA-directed RNA polymerase subunit alpha.